A 487-amino-acid polypeptide reads, in one-letter code: GTPase Der (487 aa).

EngA-type G domains follow at residues 3–166 (PVIA…IAEL) and 201–374 (VKLA…ESAT). Residues 9 to 16 (GRPNVGKS), 56 to 60 (DTGGI), 118 to 121 (NKTD), 207 to 214 (GRPNVGKS), 254 to 258 (DTAGV), and 319 to 322 (NKWD) each bind GTP. A KH-like domain is found at 375–459 (KRISTAMLRR…PIKIEFREGD (85 aa)).

The protein belongs to the TRAFAC class TrmE-Era-EngA-EngB-Septin-like GTPase superfamily. EngA (Der) GTPase family. Associates with the 50S ribosomal subunit.

Its function is as follows. GTPase that plays an essential role in the late steps of ribosome biogenesis. The chain is GTPase Der from Pseudoalteromonas translucida (strain TAC 125).